Consider the following 1360-residue polypeptide: Lysine-specific demethylase REF6 (1360 aa).

A2 carries the post-translational modification N-acetylalanine. Residues 20 to 61 (APEFRPTLAEFQDPIAYILKIEEEASRYGICKILPPLPPPSK) form the JmjN domain. Residues 203 to 369 (ETAWNMRAMS…MAKDAAIRRA (167 aa)) form the JmjC domain. H246, E248, and H337 together coordinate Fe cation. The tract at residues 652 to 698 (YGDSSDSEEEDQKGLVTPSSKGETKTYDQEGSDGHEEARDGRTSDFN) is disordered. The span at 673 to 694 (GETKTYDQEGSDGHEEARDGRT) shows a compositional bias: basic and acidic residues. Positions 944–951 (CRKRKIRA) match the Nuclear localization signal motif. 4 disordered regions span residues 955–1012 (PRKK…DPHK), 1044–1081 (AASE…SQQT), 1133–1155 (TGKR…QSSR), and 1172–1238 (EELD…NEEE). Composition is skewed to polar residues over residues 994–1008 (ETGN…NQMS) and 1046–1057 (SESSMENGSQHS). The span at 1136–1147 (RQTRSTAKRIAK) shows a compositional bias: basic residues. The span at 1225–1238 (EKEEEEEEEENEEE) shows a compositional bias: acidic residues. Residues 1243–1266 (YQCNMEGCTMSFSSEKQLMLHKRN) form a C2H2-type 1; degenerate zinc finger. 16 residues coordinate Zn(2+): C1245, C1250, H1263, C1268, C1273, H1280, H1286, H1290, C1298, C1303, H1316, H1320, C1328, C1333, H1346, and H1352. C2H2-type zinc fingers lie at residues 1266–1290 (NICP…QRVH), 1296–1320 (LKCP…IRVH), and 1326–1352 (YVCA…KTGH). The tract at residues 1275–1348 (KNFFSHKYLV…FVSDFSRHKR (74 aa)) is DNA-binding.

This sequence belongs to the JHDM3 histone demethylase family. Forms homooligomers. Interacts with BZR2 (via N-terminus). Interacts with BRM in the SWI/SNF complex. Interacts (via N-terminus) with NFYC9. Associates with INO80. In terms of tissue distribution, highly expressed in the shoot apical meristem and primary and secondary root tips, and lower expression in cotyledons, leaves and root axis along vascular tissues. Detected in inflorescences, stems and siliques. Present in seeds.

Its subcellular location is the nucleus. It catalyses the reaction N(6),N(6),N(6)-trimethyl-L-lysyl(27)-[histone H3] + 2-oxoglutarate + O2 = N(6),N(6)-dimethyl-L-lysyl(27)-[histone H3] + formaldehyde + succinate + CO2. The catalysed reaction is N(6),N(6)-dimethyl-L-lysyl(27)-[histone H3] + 2-oxoglutarate + O2 = N(6)-methyl-L-lysyl(27)-[histone H3] + formaldehyde + succinate + CO2. Functionally, histone demethylase that demethylates 'Lys-27' (H3K27me) of histone H3, thus acting as a positive regulator of gene expression. Demethylates both tri- (H3K27me3) and di-methylated (H3K27me2) H3K27me. Also demethylates H3K4me3/2 and H3K36me3/2 in an in vitro assay. Involved in the transcriptional regulation of hundreds of genes regulating developmental patterning and responses to various stimuli. Binds DNA via its four zinc fingers in a sequence-specific manner, 5'-CTCTG(C/T)T(C/T)-3' (5'-CTCTGYTY-3'), with a preference for hypo-methylated status (e.g. cytosine methylation), to promote the demethylation of H3K27me3 and recruit the chromatin remodeler BRM in order to activate gene expression. Participates in the regulation of organ boundary formation. Bind mostly motifs located in active chromatin states which are depleted for heterochromatic modifications. Involved in the regulation of flowering time by repressing FLOWERING LOCUS C (FLC) expression. Stimulates lateral roots formation (e.g. primordium initiation and emergence) via the epigenetic de-repression of PIN genes such as PIN1, PIN3 and PIN7 directly by modulating the methylation status of their loci. Interacts with the NF-Y complex to regulate SOC1. Mediates the recruitment of BRM to its target loci. Together with EEN, involved in the epigenetic chromatin-dependent regulatory mechanism that monitors the expression of the essential multifunctional plant stress regulator EIN2 via H3K27me3 repressive histone demethylation and histone variant H2A.Z eviction, thus modulating responses to ethylene (ET), especially during embryogenesis. Eluviates seed dormancy by triggering abscisic acid (ABA) catabolism in seeds via the induction of CYP707A1 and CYP707A3 expression, genes involved in ABA degradation; binds directly to CYP707A1 and CYP707A3 loci to reduce their H3K27me3 levels in developing siliques. Required for systemic acquired resistance (SAR) toward pathogenic bacteria (e.g. Pseudomonas syringae pv tomato DC3000 (avrPto)). Together with FLD and MSI4/FVE, contributes to dehydroabietinal-dependent (DA, a diterpenoid tricyclic diterpene) activation of flowering ans SAR. Binds to the HSFA2 chromatin region to alleviate H3K27me3 repressive marks and trigger its expression in response to heat in a BRM-dependent manner. Involved in the mechanisms necessary for quick response to heat and subsequent heritable transgenerational memory of heat acclimation (global warming) such as early flowering and attenuated immunity; this process includes epigenetic regulation as well as post-transcriptional gene silencing (PTGS). In response to heat, HSFA2 is activated and promotes the expression of REF6 which in turn derepresses HSFA2, thus establishing a heritable feedback loop able to trigger SGIP1 and subsequent SGIP1-mediated SGS3 degradation; this prevents the biosynthesis of trans-acting siRNA (tasiRNA) and leads to the release of HTT5, which drives early flowering but attenuates immunity. Its function is as follows. Involved in the maintenance of H3K27me1 histone marks on euchromatin in a PRC2-dependent manner, to maintain low-level basal expression of corresponding genes. Together with ELF6, required for H3K27me3 resetting (especially in constitutive heterochromatin within the pericentromeric regions) and transgenerational inheritance of histone marks, thus acting in safeguarding genome and epigenome integrity during sexual reproduction. In Arabidopsis thaliana (Mouse-ear cress), this protein is Lysine-specific demethylase REF6.